Here is a 1465-residue protein sequence, read N- to C-terminus: Myomesin-2 (1465 aa).

Residues 38-61 are disordered; sequence ASTQASSQKSLSQRSSSQRASSQT. Over residues 41-61 the composition is skewed to low complexity; the sequence is QASSQKSLSQRSSSQRASSQT. 2 Ig-like C2-type domains span residues 154–245 and 266–371; these read PEIL…AAVV and PLSS…AFLF. 5 Fibronectin type-III domains span residues 385 to 480, 513 to 608, 614 to 707, 710 to 812, and 815 to 912; these read APMD…ALDP, PPTG…AQDV, APGR…VQAA, VPSH…TMPE, and PAYD…ARPG. 3 Ig-like C2-type domains span residues 904 to 1002, 1130 to 1211, and 1345 to 1434; these read PVLV…EELE, PHFA…QDVS, and RLIG…VTVS. Residues 1442–1465 are disordered; that stretch reads IPDMAPPQQAKPKLIPASASAAGQ.

In terms of assembly, interacts with TTN/titin.

It is found in the cytoplasm. The protein localises to the myofibril. It localises to the sarcomere. Its subcellular location is the m line. Functionally, major component of the vertebrate myofibrillar M band. Binds myosin, titin, and light meromyosin. This binding is dose dependent. The sequence is that of Myomesin-2 (MYOM2) from Homo sapiens (Human).